Here is a 386-residue protein sequence, read N- to C-terminus: Succinate--CoA ligase [ADP-forming] subunit beta (386 aa).

The region spanning 9–244 (KDILRQFGVP…LDEEDPAEVE (236 aa)) is the ATP-grasp domain. Residues Lys46, 53-55 (GRG), Glu99, Ala102, and Glu107 each bind ATP. Asn199 and Asp213 together coordinate Mg(2+). Residues Asn264 and 321-323 (GIM) contribute to the substrate site.

The protein belongs to the succinate/malate CoA ligase beta subunit family. As to quaternary structure, heterotetramer of two alpha and two beta subunits. The cofactor is Mg(2+).

It carries out the reaction succinate + ATP + CoA = succinyl-CoA + ADP + phosphate. It catalyses the reaction GTP + succinate + CoA = succinyl-CoA + GDP + phosphate. The protein operates within carbohydrate metabolism; tricarboxylic acid cycle; succinate from succinyl-CoA (ligase route): step 1/1. Succinyl-CoA synthetase functions in the citric acid cycle (TCA), coupling the hydrolysis of succinyl-CoA to the synthesis of either ATP or GTP and thus represents the only step of substrate-level phosphorylation in the TCA. The beta subunit provides nucleotide specificity of the enzyme and binds the substrate succinate, while the binding sites for coenzyme A and phosphate are found in the alpha subunit. This is Succinate--CoA ligase [ADP-forming] subunit beta from Delftia acidovorans (strain DSM 14801 / SPH-1).